We begin with the raw amino-acid sequence, 717 residues long: Probable cyclic nucleotide-gated ion channel 5 (717 aa).

At 1–102 (MAGKRENFVR…DKFLLYCNKL (102 aa)) the chain is on the cytoplasmic side. The helical transmembrane segment at 103–123 (FVASCILSVFVDPFFFYLPVI) threads the bilayer. The Extracellular segment spans residues 124-136 (NAESKCLGIDRKL). A helical transmembrane segment spans residues 137 to 157 (AITASTLRTFIDVFYLAHMAL). Topologically, residues 158–190 (QLRTAYIAPSSRVFGRGELVIDPAQIAKRYLQR) are cytoplasmic. A helical membrane pass occupies residues 191-211 (WFIIDFLSVLPLPQIVVWRFL). Over 212 to 224 (QSSNGSDVLATKQ) the chain is Extracellular. Residues 225–245 (ALLFIVLVQYIPRFLRVLPLT) traverse the membrane as a helical segment. Over 246 to 265 (SELKRTAGVFAETAWAGAAY) the chain is Cytoplasmic. A helical membrane pass occupies residues 266-286 (YLLLYMLASHIVGAFWYLLAL). Residues 287 to 391 (ERNDACWQEA…GQGLETSTYP (105 aa)) lie on the Extracellular side of the membrane. The helical transmembrane segment at 392–412 (MEIIFSISLAISGLILFALLI) threads the bilayer. Over 413-717 (GNMQTYLQSL…KPPEPDFTAD (305 aa)) the chain is Cytoplasmic. Residues 498 to 628 (LFKS…TFRF) and Glu-569 contribute to the a nucleoside 3',5'-cyclic phosphate site. Positions 614–629 (FRRLHSRQVQHTFRFY) are calmodulin-binding. The region spanning 634 to 663 (RTWAACFIQAAWRRYCKRKKMEEAEAEAAA) is the IQ domain.

Belongs to the cyclic nucleotide-gated cation channel (TC 1.A.1.5) family. Homotetramer or heterotetramer.

The protein localises to the cell membrane. Probable cyclic nucleotide-gated ion channel. The chain is Probable cyclic nucleotide-gated ion channel 5 (CNGC5) from Arabidopsis thaliana (Mouse-ear cress).